Consider the following 859-residue polypeptide: Magnesium transporter ALR1 (859 aa).

The span at 1 to 20 shows a compositional bias: low complexity; it reads MSSSSSSSESSPNLSRSNSL. Disordered stretches follow at residues 1-281 and 330-399; these read MSSS…MPPQ and TSST…NIPS. Residue serine 2 is modified to N-acetylserine. 2 stretches are compositionally biased toward basic and acidic residues: residues 28–42 and 55–73; these read KTEDHTGLYDHRQHP and KNKEIAKSTKPSIPKEQKS. Phosphotyrosine is present on tyrosine 77. Serine 85 carries the phosphoserine modification. Over residues 144-154 the composition is skewed to basic and acidic residues; sequence PPKDVGVKRDY. Positions 157–176 are enriched in low complexity; it reads SSSTASSGNKSKLSASSSAS. A phosphoserine mark is found at serine 185 and serine 188. Residues 193–203 are compositionally biased toward basic and acidic residues; the sequence is IPHESKSDTHS. The segment covering 213–235 has biased composition (polar residues); that stretch reads YSTTSAHSSINPAVLLTKSTSQK. Residues serine 220, serine 221, and serine 236 each carry the phosphoserine modification. Threonine 242 carries the post-translational modification Phosphothreonine. Positions 252–265 are enriched in polar residues; that stretch reads TRASFDSDVSQASR. Low complexity predominate over residues 330–339; sequence TSSTSTSGSS. The segment covering 353–375 has biased composition (basic and acidic residues); it reads EKSESTNETEIHEKKEDEHEKIK. 2 helical membrane-spanning segments follow: residues 744–764 and 773–793; these read TMIGTMLVPLNVITGLFGMNV and IAWWFGILGVLLLLAVLGWFL. Residues 830-859 are disordered; the sequence is FNDRSKNINVRAGPSNKSVASLPSRYSRYD. Serine 850 carries the post-translational modification Phosphoserine.

This sequence belongs to the CorA metal ion transporter (MIT) (TC 1.A.35) family.

It is found in the cell membrane. In terms of biological role, plasma membrane magnesium transporter. The sequence is that of Magnesium transporter ALR1 (ALR1) from Saccharomyces cerevisiae (strain ATCC 204508 / S288c) (Baker's yeast).